The chain runs to 463 residues: Endoglucanase EG-1 (463 aa).

The signal sequence occupies residues 1 to 22 (MAPSATLPLTTAILAIGRLVAA). Residues 23 to 397 (QQPGTSTPEV…DIGSTTNSTG (375 aa)) form a catalytic region. Asparagine 78, asparagine 164, asparagine 204, and asparagine 208 each carry an N-linked (GlcNAc...) asparagine glycan. The Nucleophile role is filled by glutamate 218. Residue glutamate 223 is the Proton donor of the active site. Residues 390 to 429 (GSTTNSTGGNPPPPPPPASSTTFSTTRRSSTTSSSPSCTQ) form a disordered region. Asparagine 394 is a glycosylation site (N-linked (GlcNAc...) asparagine). Residues 402-427 (PPPPPASSTTFSTTRRSSTTSSSPSC) are linker. The segment covering 408–429 (SSTTFSTTRRSSTTSSSPSCTQ) has biased composition (low complexity). Residues 427–463 (CTQTHWGQCGGIGYTGCKTCTSGTTCQYGNDYYSQCL) form the CBM1 domain. Disulfide bonds link cysteine 435–cysteine 452 and cysteine 446–cysteine 462.

This sequence belongs to the glycosyl hydrolase 7 (cellulase C) family.

The protein localises to the secreted. The enzyme catalyses Endohydrolysis of (1-&gt;4)-beta-D-glucosidic linkages in cellulose, lichenin and cereal beta-D-glucans.. Functionally, the biological conversion of cellulose to glucose generally requires three types of hydrolytic enzymes: (1) Endoglucanases which cut internal beta-1,4-glucosidic bonds; (2) Exocellobiohydrolases that cut the disaccharide cellobiose from the non-reducing end of the cellulose polymer chain; (3) Beta-1,4-glucosidases which hydrolyze the cellobiose and other short cello-oligosaccharides to glucose. This chain is Endoglucanase EG-1 (egl1), found in Trichoderma longibrachiatum.